Consider the following 417-residue polypeptide: DNA primase small subunit (417 aa).

M1 bears the N-acetylmethionine mark. Residues E44, D109, and D111 contribute to the active site. Positions 109 and 111 each coordinate Mg(2+). Mn(2+)-binding residues include D109 and D111. 109–111 lines the a ribonucleoside 5'-triphosphate pocket; it reads DID. Zn(2+) contacts are provided by C121, C122, C128, and C131. The Zinc knuckle motif signature appears at 121–131; sequence CCSSADICSKC. 160 to 166 contributes to the a ribonucleoside 5'-triphosphate binding site; sequence SGRRGVH. Mg(2+) is bound at residue D305. Mn(2+) is bound at residue D305. Residues 314-317 and H323 each bind a ribonucleoside 5'-triphosphate; that span reads HLLK.

It belongs to the eukaryotic-type primase small subunit family. In terms of assembly, heterodimer of a catalytic subunit PRIM1 and a regulatory subunit PRIM2, also known as the DNA primase complex. Interacts with PRIM2/p58 (via C-terminus). Component of the alpha DNA polymerase complex (also known as the alpha DNA polymerase-primase complex) consisting of four subunits: the catalytic subunit POLA1, the regulatory subunit POLA2, and the primase complex subunits PRIM1 and PRIM2 respectively. Within the complex, POLA1 directly interacts with PRIM2. It depends on Mg(2+) as a cofactor. Mn(2+) is required as a cofactor.

It carries out the reaction ssDNA + n NTP = ssDNA/pppN(pN)n-1 hybrid + (n-1) diphosphate.. The presence of the regulatory subunit PRIM2/p58 accelerates the kinetics of initiation and primer extension. Functionally, catalytic subunit of the DNA primase complex and component of the DNA polymerase alpha complex (also known as the alpha DNA polymerase-primase complex) which play an essential role in the initiation of DNA synthesis. During the S phase of the cell cycle, the DNA polymerase alpha complex (composed of a catalytic subunit POLA1, an accessory subunit POLA2 and two primase subunits, the catalytic subunit PRIM1 and the regulatory subunit PRIM2) is recruited to DNA at the replicative forks via direct interactions with MCM10 and WDHD1. The primase subunit of the polymerase alpha complex initiates DNA synthesis by oligomerising short RNA primers on both leading and lagging strands. These primers are initially extended by the polymerase alpha catalytic subunit and subsequently transferred to polymerase delta and polymerase epsilon for processive synthesis on the lagging and leading strand, respectively. In the primase complex, both subunits are necessary for the initial di-nucleotide formation, but the extension of the primer depends only on the catalytic subunit. Can add both ribo- and deoxynucleotides during elongation of the primers. Synthesizes 9-mer RNA primers (also known as the 'unit length' RNA primers). Incorporates only ribonucleotides in the presence of ribo- and deoxy-nucleotide triphosphates (rNTPs, dNTPs). Requires template thymine or cytidine to start the RNA primer synthesis, with an adenine or guanine at its 5'-end. Binds single stranded DNA. This Mus musculus (Mouse) protein is DNA primase small subunit (Prim1).